The chain runs to 295 residues: Tyrosine recombinase XerC (295 aa).

Residues 1–85 (MHILLQKYYN…ALRQFLNYLV (85 aa)) enclose the Core-binding (CB) domain. The Tyr recombinase domain occupies 106–285 (YLPKNMDMEQ…DFQHLAQVYD (180 aa)). Active-site residues include R145, K169, H237, R240, and H263. Residue Y272 is the O-(3'-phospho-DNA)-tyrosine intermediate of the active site.

This sequence belongs to the 'phage' integrase family. XerC subfamily. As to quaternary structure, forms a cyclic heterotetrameric complex composed of two molecules of XerC and two molecules of XerD.

It localises to the cytoplasm. Its function is as follows. Site-specific tyrosine recombinase, which acts by catalyzing the cutting and rejoining of the recombining DNA molecules. The XerC-XerD complex is essential to convert dimers of the bacterial chromosome into monomers to permit their segregation at cell division. It also contributes to the segregational stability of plasmids. The polypeptide is Tyrosine recombinase XerC (Histophilus somni (strain 2336) (Haemophilus somnus)).